A 600-amino-acid chain; its full sequence is Proline--tRNA ligase (600 aa).

This sequence belongs to the class-II aminoacyl-tRNA synthetase family. ProS type 1 subfamily. In terms of assembly, homodimer.

The protein resides in the cytoplasm. It carries out the reaction tRNA(Pro) + L-proline + ATP = L-prolyl-tRNA(Pro) + AMP + diphosphate. In terms of biological role, catalyzes the attachment of proline to tRNA(Pro) in a two-step reaction: proline is first activated by ATP to form Pro-AMP and then transferred to the acceptor end of tRNA(Pro). As ProRS can inadvertently accommodate and process non-cognate amino acids such as alanine and cysteine, to avoid such errors it has two additional distinct editing activities against alanine. One activity is designated as 'pretransfer' editing and involves the tRNA(Pro)-independent hydrolysis of activated Ala-AMP. The other activity is designated 'posttransfer' editing and involves deacylation of mischarged Ala-tRNA(Pro). The misacylated Cys-tRNA(Pro) is not edited by ProRS. This Synechococcus elongatus (strain ATCC 33912 / PCC 7942 / FACHB-805) (Anacystis nidulans R2) protein is Proline--tRNA ligase.